The following is a 344-amino-acid chain: Phosphoribosylformylglycinamidine cyclo-ligase (344 aa).

Belongs to the AIR synthase family.

It is found in the cytoplasm. It carries out the reaction 2-formamido-N(1)-(5-O-phospho-beta-D-ribosyl)acetamidine + ATP = 5-amino-1-(5-phospho-beta-D-ribosyl)imidazole + ADP + phosphate + H(+). It functions in the pathway purine metabolism; IMP biosynthesis via de novo pathway; 5-amino-1-(5-phospho-D-ribosyl)imidazole from N(2)-formyl-N(1)-(5-phospho-D-ribosyl)glycinamide: step 2/2. The protein is Phosphoribosylformylglycinamidine cyclo-ligase of Haemophilus influenzae (strain PittGG).